Reading from the N-terminus, the 366-residue chain is Inositol 2-dehydrogenase (366 aa).

The protein belongs to the Gfo/Idh/MocA family. As to quaternary structure, homotetramer.

It carries out the reaction myo-inositol + NAD(+) = scyllo-inosose + NADH + H(+). Involved in the oxidation of myo-inositol (MI) to 2-keto-myo-inositol (2KMI or 2-inosose). The chain is Inositol 2-dehydrogenase from Rhodococcus jostii (strain RHA1).